A 746-amino-acid polypeptide reads, in one-letter code: Histone-lysine N-methyltransferase EZH2 (746 aa).

Residues 1 to 340 form an interaction with DNMT1, DNMT3A and DNMT3B region; sequence MGQTGKKSEK…AKEFAAALTA (340 aa). Residue Ser21 is modified to Phosphoserine; by PKB/AKT1. The interval 39 to 68 is interaction with EED; the sequence is KSMFSSNRQKILERTEILNQEWKQRRIQPV. A glycan (O-linked (GlcNAc) serine) is linked at Ser75. Ser76 is modified (phosphoserine). The segment at 180-222 is disordered; the sequence is QYNDDDDDDDGDDPEEREEKQKDLEDHRDDKESRPPRKFPSDK. Residues 182–195 show a composition bias toward acidic residues; it reads NDDDDDDDGDDPEE. Basic and acidic residues predominate over residues 196 to 222; sequence REEKQKDLEDHRDDKESRPPRKFPSDK. Positions 329–522 are interaction with CDYL; sequence EGAKEFAAAL…SSNHVYNYQP (194 aa). The residue at position 339 (Thr339) is a Phosphothreonine. Positions 340 to 426 are disordered; it reads AERIKTPPKR…PIKMKPNIEP (87 aa). A Phosphothreonine; by CDK1 and CDK2 modification is found at Thr345. A compositionally biased stretch (basic residues) spans 345-357; the sequence is TPPKRPGGRRRGR. Residues Ser363 and Ser366 each carry the phosphoserine modification. Phosphothreonine is present on Thr367. Positions 374-385 are enriched in basic and acidic residues; sequence ESKDTDSDREAG. Thr487 bears the Phosphothreonine mark. A CXC domain is found at 503–605; the sequence is CRKIQLKKDG…SKNVSCKNCS (103 aa). The region spanning 612–727 is the SET domain; the sequence is KHLLLAPSDV…TGEELFFDYR (116 aa). A Glycyl lysine isopeptide (Lys-Gly) (interchain with G-Cter in SUMO2) cross-link involves residue Lys634.

Belongs to the class V-like SAM-binding methyltransferase superfamily. Histone-lysine methyltransferase family. EZ subfamily. As to quaternary structure, component of the PRC2/EED-EZH2 complex, which includes EED, EZH2, SUZ12, RBBP4 and RBBP7 and possibly AEBP2. The minimum components required for methyltransferase activity of the PRC2/EED-EZH2 complex are EED, EZH2 and SUZ12. The PRC2 complex may also interact with DNMT1, DNMT3A, DNMT3B and PHF1 via the EZH2 subunit and with SIRT1 via the SUZ12 subunit. Interacts with HDAC1 and HDAC2. Binds ATRX via the SET domain. Interacts with PRAME. Interacts with CDYL. Interacts with BMAL1, CLOCK and CRY1. Interacts with DNMT3L; the interaction is direct. Interacts with EZHIP; the interaction blocks EZH2 methyltransferase activity. Interacts with ZNF263; recruited to the SIX3 promoter along with other proteins involved in chromatin modification and transcriptional corepression where it contributes to transcriptional repression. Interacts with ARMC12. Interacts with ZMYND8; the interaction is dependent on the presence of chromatin. Interacts with DDX18; this interaction inhibits the PRC2 complex. Phosphorylated by AKT1. Phosphorylation by AKT1 reduces methyltransferase activity. Phosphorylation at Thr-345 by CDK1 and CDK2 promotes maintenance of H3K27me3 levels at EZH2-target loci, thus leading to epigenetic gene silencing. Post-translationally, sumoylated. In terms of processing, glycosylated: O-GlcNAcylation at Ser-75 by OGT increases stability of EZH2 and facilitates the formation of H3K27me3 by the PRC2/EED-EZH2 complex.

It localises to the nucleus. It carries out the reaction L-lysyl(27)-[histone H3] + 3 S-adenosyl-L-methionine = N(6),N(6),N(6)-trimethyl-L-lysyl(27)-[histone H3] + 3 S-adenosyl-L-homocysteine + 3 H(+). Its function is as follows. Polycomb group (PcG) protein. Catalytic subunit of the PRC2/EED-EZH2 complex, which methylates 'Lys-9' (H3K9me) and 'Lys-27' (H3K27me) of histone H3, leading to transcriptional repression of the affected target gene. Able to mono-, di- and trimethylate 'Lys-27' of histone H3 to form H3K27me1, H3K27me2 and H3K27me3, respectively. Displays a preference for substrates with less methylation, loses activity when progressively more methyl groups are incorporated into H3K27, H3K27me0 &gt; H3K27me1 &gt; H3K27me2. Compared to EZH1-containing complexes, it is more abundant in embryonic stem cells and plays a major role in forming H3K27me3, which is required for embryonic stem cell identity and proper differentiation. The PRC2/EED-EZH2 complex may also serve as a recruiting platform for DNA methyltransferases, thereby linking two epigenetic repression systems. EZH2 can also methylate non-histone proteins such as the transcription factor GATA4 and the nuclear receptor RORA. Regulates the circadian clock via histone methylation at the promoter of the circadian genes. Essential for the CRY1/2-mediated repression of the CLOCK-BMAL1 transcriptional activation of PER1/2. Involved in the di and trimethylation of 'Lys-27' of histone H3 on PER1/2 promoters which is necessary for the CRY1/2 proteins to inhibit transcription. The protein is Histone-lysine N-methyltransferase EZH2 (EZH2) of Macaca fascicularis (Crab-eating macaque).